The following is a 159-amino-acid chain: MRTRAGMSEENPCPRNIFLLCKQYGLELEDLRLLCVYCRRALSDADVLAFAIKELSVVWRKGFPFGACGKCLIAAGKLRQYRHWHYSCYGDTVETETGIPIPQLFMRCYICHKPLSWEEKEALLVGNKRFHNISGRWTGHCMQCGSTCTAPDPASRTLH.

Zinc fingers lie at residues 35-71 and 108-144; these read CVYC…CGKC and CYIC…CMQC.

Belongs to the papillomaviridae E6 protein family. As to quaternary structure, forms homodimers. Interacts with ubiquitin-protein ligase UBE3A/E6-AP; this interaction stimulates UBE3A ubiquitin activity. Interacts with host TP53 and EP300; this interaction inhibits TP53 activity.

It localises to the host cytoplasm. The protein resides in the host nucleus. Functionally, plays a major role in the induction and maintenance of cellular transformation. E6 associates with host UBE3A/E6-AP ubiquitin-protein ligase and modulates its activity. Sequesters tumor suppressor TP53 in the host cytoplasm and modulates its activity by interacting with host EP300 that results in the reduction of TP53 acetylation and activation. In turn, apoptosis induced by DNA damage is inhibited. E6 also protects host keratinocytes from apoptosis by mediating the degradation of host BAK1. May also inhibit host immune response. The protein is Protein E6 of Homo sapiens (Human).